The primary structure comprises 110 residues: uncharacterized protein (110 aa).

Residues 86-110 (SEEIDEPVMKKRHRRKGSPHRAPFF) are disordered. A compositionally biased stretch (basic residues) spans 95-104 (KKRHRRKGSP).

This is an uncharacterized protein from Arabidopsis thaliana (Mouse-ear cress).